Consider the following 256-residue polypeptide: MTDVARILKEARDQGRMTALDYASLIFDEFMELHGDRQFADDGSIVGGIAYLADQPVTVIGIQKGKNLQDNLARNFGQPHPEGYRKALRLMKQAEKFGRPVITFINTAGAYPGVGAEERGQGEAIARNLMEMSDLKVPIIAIIIGEGGSGGALALAVADQVWMLENTMYAVLSPEGFASILWKDGSRATEAAELMKITAAELYQMGVIDRIIPERGYFSSEIIEMIRSHLIDEITQLQAKSLEELLDQRYQRFRKY.

A CoA carboxyltransferase C-terminal domain is found at methionine 1–glutamine 236.

This sequence belongs to the AccA family. Acetyl-CoA carboxylase is a heterohexamer composed of biotin carboxyl carrier protein (AccB), biotin carboxylase (AccC) and two subunits each of ACCase subunit alpha (AccA) and ACCase subunit beta (AccD).

The protein resides in the cytoplasm. It catalyses the reaction N(6)-carboxybiotinyl-L-lysyl-[protein] + acetyl-CoA = N(6)-biotinyl-L-lysyl-[protein] + malonyl-CoA. It participates in lipid metabolism; malonyl-CoA biosynthesis; malonyl-CoA from acetyl-CoA: step 1/1. In terms of biological role, component of the acetyl coenzyme A carboxylase (ACC) complex. First, biotin carboxylase catalyzes the carboxylation of biotin on its carrier protein (BCCP) and then the CO(2) group is transferred by the carboxyltransferase to acetyl-CoA to form malonyl-CoA. This is Acetyl-coenzyme A carboxylase carboxyl transferase subunit alpha from Streptococcus equi subsp. zooepidemicus (strain MGCS10565).